A 398-amino-acid polypeptide reads, in one-letter code: Nematocin receptor 2 (398 aa).

Residues 1–25 (MNNNTLNITNQRTAAAMSQIYFLVV) are Extracellular-facing. Residues Asn3 and Asn7 are each glycosylated (N-linked (GlcNAc...) asparagine). A helical membrane pass occupies residues 26–46 (YQTAVMIVSLLGNLFLLFVIF). The Cytoplasmic portion of the chain corresponds to 47 to 58 (RANQVMKRRVSP). Residues 59-79 (VQLLIIHTCVADLLFALLSLG) traverse the membrane as a helical segment. At 80-99 (TEILTLRTYPQYYGSNFVCK) the chain is on the extracellular side. A disulfide bridge connects residues Cys98 and Cys173. A helical transmembrane segment spans residues 100–120 (LMRYVQMFPMYASPFLLVAIS). The Cytoplasmic portion of the chain corresponds to 121-143 (ADRYQAICRPLAHFRSSRYRRPN). A helical membrane pass occupies residues 144-164 (WMAAIAWGLALVLSIPQFFVW). Residues 165–187 (TKHSKTGRCSTIYGQNKNTVKIT) lie on the Extracellular side of the membrane. The helical transmembrane segment at 188–208 (YVIMFNTLAWLLPSILAAVFY) threads the bilayer. Over 209–271 (YCVCKAVRLS…DRKRVQTVRL (63 aa)) the chain is Cytoplasmic. The chain crosses the membrane as a helical span at residues 272 to 292 (TITIVACNFFLWMPFCLINVI). Topologically, residues 293–302 (QALWPEISHI) are extracellular. A helical membrane pass occupies residues 303–325 (MFINYVAILGNLNSCLNPWIYIL). At 326–398 (FNRSHVRKAL…DSTSLKTNSN (73 aa)) the chain is on the cytoplasmic side.

Belongs to the G-protein coupled receptor 1 family. Vasopressin/oxytocin receptor subfamily. In terms of tissue distribution, detected in the ADL sensory neurons, the RMED and RMEV motor neurons, and the PQR tail neuron. In males, detected in SPC tail neurons involved in spicule penetration and sperm transfer, and male-specific oblique muscles involved in vulval contact.

It is found in the cell membrane. In terms of biological role, not directly activated by nematocin. May modulate activity of the nematocin receptor ntr-1, leading to reduced intracellular cAMP production. Plays a role in male mating behavior. The sequence is that of Nematocin receptor 2 from Caenorhabditis elegans.